A 269-amino-acid chain; its full sequence is Undecaprenyl-diphosphatase (269 aa).

The next 8 membrane-spanning stretches (helical) occupy residues 3–23, 41–61, 78–98, 107–127, 148–167, 184–204, 213–233, and 248–268; these read LLIKAFIMGIVEGLTEFLPIS, FATMFEIVIQLGAILAVVFYY, GFNLWFKIFIAFIPAAVIGLL, LFSPFTVAIALIAGAIMMIVI, SLLIGIAQVMSLFPGMSRSA, AEFSFFLAIPTMFAATTLSLL, LEWQALAVGFITSFLTALFVV, and FAYYRLAVGVLMILLVAEKIV.

This sequence belongs to the UppP family.

The protein localises to the cell membrane. It carries out the reaction di-trans,octa-cis-undecaprenyl diphosphate + H2O = di-trans,octa-cis-undecaprenyl phosphate + phosphate + H(+). Its function is as follows. Catalyzes the dephosphorylation of undecaprenyl diphosphate (UPP). Confers resistance to bacitracin. In Thermoanaerobacter sp. (strain X514), this protein is Undecaprenyl-diphosphatase.